Reading from the N-terminus, the 179-residue chain is MSPDSCPLVKNILLLDSEGKRVAVKYYSDDWPTNAAKLSFEKYVFSKTSKTNARTEAEITLLDSNIIVYKFAQDLHFFVTGGENENELILASVLQGFFDAVALLLRSNVEKMEALENLDLIFLCLDEMVDQGVVLETDPNVIAGKVAMQSTEASGSLSEQTLTQALATAREHLARSLLT.

It belongs to the adaptor complexes small subunit family. In terms of assembly, oligomeric complex that consists of at least the alpha, beta, beta', gamma, delta, epsilon and zeta subunits.

The protein resides in the cytoplasm. Its subcellular location is the golgi apparatus membrane. It localises to the cytoplasmic vesicle. The protein localises to the COPI-coated vesicle membrane. The coatomer is a cytosolic protein complex that binds to dilysine motifs and reversibly associates with Golgi non-clathrin-coated vesicles, which further mediate biosynthetic protein transport from the ER, via the Golgi up to the trans Golgi network. Coatomer complex is required for budding from Golgi membranes, and is essential for the retrograde Golgi-to-ER transport of dilysine-tagged proteins. The zeta subunit may be involved in regulating the coat assembly and, hence, the rate of biosynthetic protein transport due to its association-dissociation properties with the coatomer complex. The chain is Coatomer subunit zeta-2 from Arabidopsis thaliana (Mouse-ear cress).